The following is a 477-amino-acid chain: Glycogen synthase (477 aa).

An ADP-alpha-D-glucose-binding site is contributed by lysine 15.

The protein belongs to the glycosyltransferase 1 family. Bacterial/plant glycogen synthase subfamily.

It catalyses the reaction [(1-&gt;4)-alpha-D-glucosyl](n) + ADP-alpha-D-glucose = [(1-&gt;4)-alpha-D-glucosyl](n+1) + ADP + H(+). Its pathway is glycan biosynthesis; glycogen biosynthesis. In terms of biological role, synthesizes alpha-1,4-glucan chains using ADP-glucose. The sequence is that of Glycogen synthase from Salmonella choleraesuis (strain SC-B67).